Here is a 337-residue protein sequence, read N- to C-terminus: Fructose-1,6-bisphosphatase class 1 (337 aa).

4 residues coordinate Mg(2+): glutamate 89, aspartate 112, leucine 114, and aspartate 115. Substrate is bound by residues 115–118 (DGSS), asparagine 208, tyrosine 241, and lysine 271. Glutamate 277 provides a ligand contact to Mg(2+).

Belongs to the FBPase class 1 family. In terms of assembly, homotetramer. Requires Mg(2+) as cofactor.

It localises to the cytoplasm. It carries out the reaction beta-D-fructose 1,6-bisphosphate + H2O = beta-D-fructose 6-phosphate + phosphate. It functions in the pathway carbohydrate biosynthesis; gluconeogenesis. This chain is Fructose-1,6-bisphosphatase class 1, found in Yersinia pseudotuberculosis serotype O:1b (strain IP 31758).